The following is a 162-amino-acid chain: Large ribosomal subunit protein uL15 (162 aa).

A compositionally biased stretch (basic and acidic residues) spans M1–R18. A disordered region spans residues M1–T42. Gly residues predominate over residues R21–V35.

The protein belongs to the universal ribosomal protein uL15 family. As to quaternary structure, part of the 50S ribosomal subunit.

Its function is as follows. Binds to the 23S rRNA. This chain is Large ribosomal subunit protein uL15, found in Methylobacterium sp. (strain 4-46).